The sequence spans 812 residues: INO80 complex subunit D (812 aa).

Disordered stretches follow at residues 521–573 (NSRK…LCMP) and 581–600 (EVSS…ELPD). A compositionally biased stretch (basic residues) spans 524 to 558 (KVQHHQQRKPRKKTKPPALTKKTKKKRRRGPRRPQ). Residues 585–595 (IRSPSTPNLST) show a composition bias toward polar residues.

This sequence belongs to the INO80D family. As to quaternary structure, component of the chromatin-remodeling INO80 complex.

It localises to the nucleus. Functionally, putative regulatory component of the chromatin remodeling INO80 complex which is involved in transcriptional regulation, DNA replication and probably DNA repair. In Xenopus laevis (African clawed frog), this protein is INO80 complex subunit D.